A 621-amino-acid polypeptide reads, in one-letter code: Chaperone protein HtpG (621 aa).

The segment at 1–328 (MTQEKKKFDA…SEDLPLNISR (328 aa)) is a; substrate-binding. The segment at 329 to 544 (ESLQHNNVLE…DTAMDIRMER (216 aa)) is b. Residues 545 to 621 (FLIEQKQIAS…LNDILQKAIL (77 aa)) form a c region.

Belongs to the heat shock protein 90 family. In terms of assembly, homodimer.

Its subcellular location is the cytoplasm. Its function is as follows. Molecular chaperone. Has ATPase activity. The protein is Chaperone protein HtpG of Rickettsia typhi (strain ATCC VR-144 / Wilmington).